A 359-amino-acid chain; its full sequence is Nicotinate-nucleotide--dimethylbenzimidazole phosphoribosyltransferase (359 aa).

The active-site Proton acceptor is the Glu-318.

It belongs to the CobT family. Homodimer.

It catalyses the reaction 5,6-dimethylbenzimidazole + nicotinate beta-D-ribonucleotide = alpha-ribazole 5'-phosphate + nicotinate + H(+). Its pathway is nucleoside biosynthesis; alpha-ribazole biosynthesis; alpha-ribazole from 5,6-dimethylbenzimidazole: step 1/2. Functionally, catalyzes the synthesis of alpha-ribazole-5'-phosphate from nicotinate mononucleotide (NAMN) and 5,6-dimethylbenzimidazole (DMB). The chain is Nicotinate-nucleotide--dimethylbenzimidazole phosphoribosyltransferase from Escherichia coli O157:H7.